A 712-amino-acid chain; its full sequence is Protein TAPT1 homolog (712 aa).

The span at 1–21 (MNNVPSTSRENSRNPSESSSS) shows a compositional bias: low complexity. Disordered regions lie at residues 1–22 (MNNV…SSSI) and 44–66 (ITMS…EIET). 7 helical membrane-spanning segments follow: residues 196–216 (FFYL…GALL), 222–242 (TSAE…SMLI), 305–325 (TCGH…LVIL), 379–399 (HIFA…NWNI), 402–422 (FTEM…VDWL), 470–490 (GFIP…TFTL), and 497–517 (IIFG…GVVM). Basic and acidic residues predominate over residues 596 to 619 (EIRRSTDRETAVSHLTARSDERTP). The disordered stretch occupies residues 596–712 (EIRRSTDRET…MPEQGVQRIE (117 aa)). Residues 656-667 (TENNTNSNSEQA) are compositionally biased toward polar residues. A compositionally biased stretch (low complexity) spans 675-692 (TAAPVTSSASTNTNATSS).

It belongs to the TAPT1 family.

The protein resides in the membrane. The protein is Protein TAPT1 homolog of Caenorhabditis elegans.